Here is a 229-residue protein sequence, read N- to C-terminus: Pdp3-interacting factor 1 (229 aa).

Residue aspartate 12 is the Nucleophile of the active site. 3 residues coordinate Mg(2+): aspartate 12, aspartate 14, and aspartate 176. Aspartate 14 acts as the Proton donor in catalysis.

It belongs to the HAD-like hydrolase superfamily. In terms of assembly, component of the mst2 complex composed of at least eaf6, mst2, nto1, pdp3, ptf1, ptf2 and tfg3. Mg(2+) serves as cofactor.

Its subcellular location is the cytoplasm. The protein resides in the nucleus. It carries out the reaction D-ribitol 5-phosphate + H2O = ribitol + phosphate. The catalysed reaction is D-sorbitol 6-phosphate + H2O = D-sorbitol + phosphate. The enzyme catalyses sn-glycerol 1-phosphate + H2O = glycerol + phosphate. It catalyses the reaction D-erythrose 4-phosphate + H2O = D-erythrose + phosphate. In terms of biological role, component of the mst2 complex which is a highly specific H3 lysine 14 (H3K14) acetyltransferase that functions together with gcn5 to regulate global levels of H3K14 acetylation (H3K14ac), critical for DNA damage checkpoint activation. Its function is as follows. May also function as a sugar alcohol (polyol) phosphatase that prevents accumulation of toxic levels of polyol phosphates, which can impair glycolysis by inhibiting glucose-6-phosphate isomerase. This chain is Pdp3-interacting factor 1, found in Schizosaccharomyces pombe (strain 972 / ATCC 24843) (Fission yeast).